Reading from the N-terminus, the 203-residue chain is Large ribosomal subunit protein bL25 (203 aa).

Belongs to the bacterial ribosomal protein bL25 family. CTC subfamily. Part of the 50S ribosomal subunit; part of the 5S rRNA/L5/L18/L25 subcomplex. Contacts the 5S rRNA. Binds to the 5S rRNA independently of L5 and L18.

In terms of biological role, this is one of the proteins that binds to the 5S RNA in the ribosome where it forms part of the central protuberance. The protein is Large ribosomal subunit protein bL25 of Cellvibrio japonicus (strain Ueda107) (Pseudomonas fluorescens subsp. cellulosa).